A 212-amino-acid chain; its full sequence is ATP phosphoribosyltransferase (212 aa).

It belongs to the ATP phosphoribosyltransferase family. Short subfamily. As to quaternary structure, heteromultimer composed of HisG and HisZ subunits.

It localises to the cytoplasm. The catalysed reaction is 1-(5-phospho-beta-D-ribosyl)-ATP + diphosphate = 5-phospho-alpha-D-ribose 1-diphosphate + ATP. The protein operates within amino-acid biosynthesis; L-histidine biosynthesis; L-histidine from 5-phospho-alpha-D-ribose 1-diphosphate: step 1/9. Functionally, catalyzes the condensation of ATP and 5-phosphoribose 1-diphosphate to form N'-(5'-phosphoribosyl)-ATP (PR-ATP). Has a crucial role in the pathway because the rate of histidine biosynthesis seems to be controlled primarily by regulation of HisG enzymatic activity. This chain is ATP phosphoribosyltransferase, found in Geobacter metallireducens (strain ATCC 53774 / DSM 7210 / GS-15).